The chain runs to 164 residues: Phosphopantetheine adenylyltransferase (164 aa).

Residue Ser-10 participates in substrate binding. Residues 10–11 (SF) and His-18 each bind ATP. Substrate is bound by residues Lys-42, Leu-74, and Arg-88. ATP is bound by residues 89–91 (GLR), Glu-99, and 124–130 (YAFLSSS).

It belongs to the bacterial CoaD family. In terms of assembly, homohexamer. The cofactor is Mg(2+).

It localises to the cytoplasm. The enzyme catalyses (R)-4'-phosphopantetheine + ATP + H(+) = 3'-dephospho-CoA + diphosphate. The protein operates within cofactor biosynthesis; coenzyme A biosynthesis; CoA from (R)-pantothenate: step 4/5. In terms of biological role, reversibly transfers an adenylyl group from ATP to 4'-phosphopantetheine, yielding dephospho-CoA (dPCoA) and pyrophosphate. The protein is Phosphopantetheine adenylyltransferase of Geobacillus thermodenitrificans (strain NG80-2).